The chain runs to 307 residues: Thymidylate synthase (307 aa).

Arginine 44 contributes to the dUMP binding site. A Phosphoserine modification is found at serine 108. Residues 169–170 (RR), 189–190 (CH), 209–212 (RSGD), asparagine 220, and 250–252 (HIY) each bind dUMP. Cysteine 189 acts as the Nucleophile in catalysis. Residue aspartate 212 coordinates (6R)-5,10-methylene-5,6,7,8-tetrahydrofolate. Glycyl lysine isopeptide (Lys-Gly) (interchain with G-Cter in SUMO2) cross-links involve residues lysine 286 and lysine 302. Alanine 306 provides a ligand contact to (6R)-5,10-methylene-5,6,7,8-tetrahydrofolate.

It belongs to the thymidylate synthase family. As to quaternary structure, homodimer.

Its subcellular location is the nucleus. The protein resides in the cytoplasm. The protein localises to the mitochondrion. It is found in the mitochondrion matrix. It localises to the mitochondrion inner membrane. It catalyses the reaction dUMP + (6R)-5,10-methylene-5,6,7,8-tetrahydrofolate = 7,8-dihydrofolate + dTMP. It participates in pyrimidine metabolism; dTTP biosynthesis. Functionally, catalyzes the reductive methylation of 2'-deoxyuridine 5'-monophosphate (dUMP) to thymidine 5'-monophosphate (dTMP), using the cosubstrate, 5,10- methylenetetrahydrofolate (CH2H4folate) as a 1-carbon donor and reductant and contributes to the de novo mitochondrial thymidylate biosynthesis pathway. This Mus musculus (Mouse) protein is Thymidylate synthase (Tyms).